The primary structure comprises 63 residues: 2-hydroxymuconate tautomerase (63 aa).

The active-site Proton acceptor; via imino nitrogen is the Pro2.

The protein belongs to the 4-oxalocrotonate tautomerase family. As to quaternary structure, homohexamer.

It carries out the reaction (2Z,4E)-2-hydroxyhexa-2,4-dienedioate = (3E)-2-oxohex-3-enedioate. It functions in the pathway aromatic compound metabolism; salicylate degradation. Functionally, catalyzes the ketonization of 2-hydroxymuconate stereoselectively to yield 2-oxo-3-hexenedioate. This Comamonas testosteroni (Pseudomonas testosteroni) protein is 2-hydroxymuconate tautomerase (aphI).